The sequence spans 5412 residues: Mucin-4 (5412 aa).

A signal peptide spans 1-28; it reads MKGARWRRVPWVSLSCLCLCLLPHVVPG. 2 disordered regions span residues 40 to 87 and 142 to 249; these read TAAP…TTSK and TSTD…ATSS. The segment at 43–4241 is variable number of tandem repeats (VNTR); it reads PVTSTGSTTA…SVSTGHATPL (4199 aa). Residues 142 to 163 are compositionally biased toward low complexity; the sequence is TSTDSTLGNTEETSTAGTESST. O-linked (GalNAc...) threonine glycans are attached at residues threonine 154 and threonine 156. A compositionally biased stretch (polar residues) spans 164-199; sequence PVTSAVSITAGQEGQSRTTSWRTSIQDTSASSQNHW. A compositionally biased stretch (low complexity) spans 200 to 223; the sequence is TRSTQTTRESQTSTLTHRTTSTPS. The span at 224–249 shows a compositional bias: polar residues; sequence FSPSVHNVTGTVSQKTSPSGETATSS. A glycan (N-linked (GlcNAc...) asparagine) is linked at asparagine 230. Threonine 234 is a glycosylation site (O-linked (GalNAc...) threonine). Asparagine 255 carries N-linked (GlcNAc...) asparagine glycosylation. 3 stretches are compositionally biased toward polar residues: residues 267-285, 306-328, and 358-367; these read TTST…SVPV, SPAT…HQTQ, and GFNPSGTVSQ. 16 disordered regions span residues 267–286, 303–328, 353–383, 438–473, 488–580, 592–853, 868–963, 983–1864, 1878–2078, 2111–2220, 2232–2814, 2837–3306, 3320–3580, 3592–3644, 3656–3756, and 3769–4223; these read TTST…VPVT, EGQS…HQTQ, LSSP…PSSV, LSPS…SFSP, WPSS…ALLS, TATS…ASAS, VPGT…SGSG, SSAS…DASS, ASSV…TGHA, TALH…ASTG, SAST…TGHA, IPSS…SSVS, SAST…VSTG, SVST…VSTG, SVST…ASTG, and VSTG…GHAT. O-linked (GalNAc...) threonine glycosylation is found at threonine 364, threonine 369, and threonine 376. The span at 368 to 383 shows a compositional bias: low complexity; sequence ETFPSGETTTSSPSSV. Composition is skewed to polar residues over residues 450–459, 488–526, and 546–557; these read AFHTQQSEGA, WPSS…TGTA, and TTYSSHSTTLPK. Low complexity-rich tracts occupy residues 558 to 577 and 615 to 627; these read TTGA…TGEA and STNH…TSTS. Asparagine 617 carries an N-linked (GlcNAc...) asparagine glycan. 3 O-linked (GalNAc...) threonine glycosylation sites follow: threonine 620, threonine 666, and threonine 688. Polar residues predominate over residues 628 to 677; that stretch reads PQESPAVSQRGHTQAPQTTQESQTTRSVSPMTDTKTVTTPGSSFTASGHS. A compositionally biased stretch (low complexity) spans 705–717; that stretch reads TTQAPTTALQAAP. Residues 729 to 746 show a composition bias toward polar residues; the sequence is GTSLSKTGALTLANSVVS. A glycan (O-linked (GalNAc...) threonine) is linked at threonine 747. Positions 756–771 are enriched in low complexity; the sequence is TSASASTSPDTAAAMT. A compositionally biased stretch (polar residues) spans 772 to 789; it reads HTHQAESTEASGQTQTSE. The segment covering 790-828 has biased composition (low complexity); it reads PASSGSRTTSAGTATPSSSGASGTTPSGSEGISTSGETT. O-linked (GalNAc...) threonine glycans are attached at residues threonine 797, threonine 798, threonine 802, threonine 804, threonine 813, and threonine 814. Over residues 829–852 the composition is skewed to polar residues; the sequence is RFSSNPSRDSHTTQSTTELLSASA. Residues threonine 881, threonine 886, and threonine 892 are each glycosylated (O-linked (GalNAc...) threonine). A compositionally biased stretch (low complexity) spans 885–903; that stretch reads PTGQSSPTSPSASPQETAA. A compositionally biased stretch (polar residues) spans 907-928; the sequence is MAQTQRTRTSRGSDTISLASQA. The segment covering 929–950 has biased composition (low complexity); that stretch reads TDTFSTVPPTPPSITSTGLTSP. Residues threonine 931, threonine 934, threonine 938, threonine 943, threonine 945, threonine 948, threonine 952, threonine 954, threonine 1003, threonine 1007, threonine 1012, threonine 1019, threonine 1022, threonine 1023, threonine 1028, threonine 1030, threonine 1035, threonine 1039, threonine 1044, threonine 1051, threonine 1055, threonine 1060, threonine 1062, threonine 1067, threonine 1071, threonine 1076, threonine 1083, threonine 1086, threonine 1087, threonine 1092, threonine 1094, threonine 1099, threonine 1103, threonine 1108, threonine 1110, threonine 1115, threonine 1118, threonine 1119, threonine 1124, threonine 1126, threonine 1131, threonine 1135, threonine 1172, threonine 1179, threonine 1182, threonine 1183, threonine 1188, threonine 1195, threonine 1199, threonine 1204, threonine 1236, threonine 1243, threonine 1246, and threonine 1247 are each glycosylated (O-linked (GalNAc...) threonine). Polar residues predominate over residues 951 to 963; the sequence is QTETHTLSPSGSG. The segment covering 1007–1024 has biased composition (low complexity); the sequence is TPLPVTSPSSVSTGHTTP. Residues 1028–1054 are compositionally biased toward polar residues; it reads TDTSSESTGHVTPLPVTSFSSASTGDS. Polar residues predominate over residues 1060 to 1086; that stretch reads TDTSSASTGHVTPLPVTSLSSASTGDT. Polar residues predominate over residues 1092–1118; sequence TDTSSASTGHATSLPVTDTSSVSTGHT. Composition is skewed to polar residues over residues 1124–1150 and 1157–1197; these read TDTS…TGHT and DASS…STGH. Composition is skewed to polar residues over residues 1204–1213 and 1221–1246; these read TDTSSASTGH and DASS…TGHT. The segment covering 1252–1262 has biased composition (polar residues); sequence TDTSSASTGQA. A compositionally biased stretch (low complexity) spans 1263 to 1279; sequence TSLLVTDTSSVSTGDTT. O-linked (GalNAc...) threonine glycans are attached at residues threonine 1278, threonine 1279, threonine 1284, threonine 1286, threonine 1291, threonine 1295, threonine 1300, threonine 1307, threonine 1311, threonine 1316, threonine 1323, threonine 1326, threonine 1332, threonine 1339, threonine 1342, threonine 1343, and threonine 1348. The span at 1281-1325 shows a compositional bias: polar residues; that stretch reads LPVTSTSSASTGHVTPLHVTSPSSASTGHATPLPVTSLSSASTGD. Residues 1332-1342 show a composition bias toward polar residues; the sequence is TSPSSASTGDT. Composition is skewed to polar residues over residues 1349–1358 and 1365–1405; these read DASSVSTGHT and DASS…STGH. O-linked (GalNAc...) threonine glycosylation is found at threonine 1380, threonine 1387, threonine 1390, threonine 1391, threonine 1396, threonine 1403, threonine 1407, threonine 1412, threonine 1444, threonine 1451, threonine 1454, and threonine 1455. Composition is skewed to polar residues over residues 1412 to 1421 and 1429 to 1454; these read TDTSSASTGH and DASS…TGHT. The segment covering 1460 to 1470 has biased composition (polar residues); it reads TDTSSASTGQA. A compositionally biased stretch (low complexity) spans 1471–1487; it reads TSLLVTDTSSVSTGDTT. Threonine 1486, threonine 1487, threonine 1492, threonine 1494, threonine 1499, threonine 1503, threonine 1508, threonine 1515, threonine 1519, threonine 1524, threonine 1531, threonine 1534, threonine 1540, threonine 1547, threonine 1550, threonine 1551, threonine 1556, threonine 1563, threonine 1566, threonine 1567, threonine 1572, threonine 1579, threonine 1582, threonine 1583, threonine 1588, threonine 1590, threonine 1598, threonine 1599, threonine 1604, threonine 1611, threonine 1614, threonine 1615, threonine 1620, threonine 1622, threonine 1627, and threonine 1630 each carry an O-linked (GalNAc...) threonine glycan. The segment covering 1489–1533 has biased composition (polar residues); sequence LPVTSTSSASTGHVTPLHVTSPSSASTGHATPLPVTSLSSASTGD. Residues 1540–1550 show a composition bias toward polar residues; that stretch reads TSPSSASTGDT. Residues 1557–1582 show a composition bias toward polar residues; sequence DASSVSTGHTTPLPVTSPSSASTGHT. The span at 1588–1614 shows a compositional bias: polar residues; sequence TDTSSASKGDTTPLPVTSPSSASTGHT. The segment covering 1620–1631 has biased composition (low complexity); that stretch reads TDTSSASTGDTT. Positions 1633–1661 are enriched in polar residues; that stretch reads LPVTNASSLSTGHATPLHVTSPSSASTGH. An N-linked (GlcNAc...) asparagine glycan is attached at asparagine 1637. Threonine 1659, threonine 1663, threonine 1668, threonine 1670, threonine 1675, threonine 1679, threonine 1716, threonine 1723, threonine 1726, threonine 1727, threonine 1732, threonine 1764, threonine 1766, threonine 1812, threonine 1819, threonine 1822, threonine 1823, threonine 1828, threonine 1835, threonine 1838, threonine 1839, threonine 1844, threonine 1854, and threonine 1855 each carry an O-linked (GalNAc...) threonine glycan. Low complexity predominate over residues 1668 to 1679; sequence TSTSSASTGHAT. Composition is skewed to polar residues over residues 1701 to 1741, 1749 to 1773, and 1812 to 1822; these read DVSS…STGH, DASS…STAH, and TSPSSASTGDT. The span at 1828–1840 shows a compositional bias: low complexity; it reads TDASSASTGDTTS. Polar residues-rich tracts occupy residues 1841-1864, 1892-1902, and 1909-1950; these read LPVT…DASS, TDTNSASTGDT, and DASS…SGHT. Residues threonine 1931, threonine 1934, threonine 1935, threonine 1940, threonine 1950, threonine 1951, threonine 1956, threonine 1963, threonine 1995, threonine 1999, threonine 2004, threonine 2006, threonine 2015, threonine 2020, threonine 2027, threonine 2030, threonine 2031, threonine 2036, threonine 2038, threonine 2047, threonine 2052, threonine 2062, threonine 2063, threonine 2132, threonine 2137, threonine 2139, threonine 2142, threonine 2143, threonine 2148, threonine 2150, threonine 2155, threonine 2159, threonine 2164, threonine 2180, threonine 2182, threonine 2187, threonine 2191, threonine 2196, threonine 2198, threonine 2203, threonine 2207, threonine 2244, threonine 2254, and threonine 2255 are each glycosylated (O-linked (GalNAc...) threonine). Residues 1957 to 1981 show a composition bias toward polar residues; sequence DASSVPTGHATSLPVTDASSVSTGH. The span at 2004–2030 shows a compositional bias: polar residues; it reads TDTSSVSTGQATPLPVTSLSSASTGDT. A compositionally biased stretch (polar residues) spans 2036–2077; sequence TDTSSASTGQDTPLPVTSLSSVSTGDTTPLPVTNPSSASTGH. Positions 2125–2146 are enriched in low complexity; it reads DTTPLPVTSPSSTSTGDTTPLP. Positions 2148-2189 are enriched in polar residues; sequence TETSSVSTGHATSLPVTDTSSASTGHATSLPVTDTSSASTGH. Composition is skewed to polar residues over residues 2196-2219 and 2232-2254; these read TDTS…SAST and SAST…TGDT. Polar residues predominate over residues 2261–2270; the sequence is DASSVSTGHA. A compositionally biased stretch (low complexity) spans 2271 to 2283; it reads TSLPVTSLSSVST. Threonine 2283, threonine 2286, threonine 2287, threonine 2292, threonine 2299, threonine 2303, threonine 2308, threonine 2324, threonine 2331, threonine 2334, threonine 2335, threonine 2340, threonine 2347, threonine 2351, threonine 2356, threonine 2363, threonine 2366, threonine 2367, threonine 2372, threonine 2382, threonine 2383, threonine 2388, threonine 2395, threonine 2398, threonine 2399, and threonine 2406 each carry an O-linked (GalNAc...) threonine glycan. Positions 2284–2301 are enriched in polar residues; it reads GDTTPLPVTSPSSASTGH. Residues 2309–2349 show a composition bias toward polar residues; that stretch reads DASSASTGHATPLPVTSLSSASTGDTTPLPVTSPSSASTGH. The span at 2366-2399 shows a compositional bias: low complexity; that stretch reads TTPLPVTSSSSASSGHTTPLPVTDASSASTGDTT. 2 stretches are compositionally biased toward polar residues: residues 2404-2413 and 2421-2445; these read TDTSSASTGH and GLSS…STGH. N-linked (GlcNAc...) asparagine glycosylation is present at asparagine 2437. O-linked (GalNAc...) threonine glycosylation is found at threonine 2452, threonine 2454, threonine 2459, threonine 2462, threonine 2463, threonine 2468, threonine 2500, threonine 2507, threonine 2510, threonine 2511, threonine 2516, threonine 2518, threonine 2523, and threonine 2526. The span at 2452 to 2471 shows a compositional bias: low complexity; it reads TSTSSASTGDTTPLPGTDTS. A compositionally biased stretch (polar residues) spans 2485–2510; it reads DASSVSTGDTTRLPVTSPSSASTGHT. Residues 2517 to 2573 are compositionally biased toward polar residues; it reads DTPSASTGDTTPLPVTNASSLSTRHATSLHVTSPSSASTGHATSLPVTDTSAASTGH. An N-linked (GlcNAc...) asparagine glycan is attached at asparagine 2533. O-linked (GalNAc...) threonine glycosylation is found at threonine 2564, threonine 2566, threonine 2571, threonine 2575, threonine 2580, threonine 2582, threonine 2587, threonine 2590, threonine 2591, threonine 2596, threonine 2598, threonine 2619, threonine 2622, threonine 2623, threonine 2628, threonine 2660, threonine 2667, threonine 2670, threonine 2671, threonine 2676, threonine 2683, threonine 2687, threonine 2692, and threonine 2694. The span at 2580–2591 shows a compositional bias: low complexity; sequence TSTSSASTGDTT. 2 stretches are compositionally biased toward polar residues: residues 2597-2637 and 2645-2691; these read DTYS…STGH and DASS…SLPV. Residues 2692–2704 show a composition bias toward low complexity; it reads TDTSSASTGDTTS. Residues 2705–2723 are compositionally biased toward polar residues; it reads LPVTDTSSAYTGDTTSLPV. The span at 2724–2735 shows a compositional bias: low complexity; the sequence is TDTSSSSTGDTT. O-linked (GalNAc...) threonine glycosylation is found at threonine 2740, threonine 2742, threonine 2750, threonine 2751, threonine 2756, threonine 2758, threonine 2763, and threonine 2767. The span at 2740–2750 shows a compositional bias: polar residues; that stretch reads TETSSVSTGDT. Residues 2756 to 2798 are compositionally biased toward polar residues; sequence TDTSSASTGHATPLPVTNTSSVSTGHATPLHVTSPSSASTGHT. N-linked (GlcNAc...) asparagine glycosylation occurs at asparagine 2773. O-linked (GalNAc...) threonine glycans are attached at residues threonine 2779, threonine 2783, threonine 2788, threonine 2795, threonine 2798, threonine 2799, and threonine 2804. Polar residues-rich tracts occupy residues 2805 to 2814 and 2837 to 2846; these read DASSVSTGHA and IPSSASSGHT. Threonine 2846, threonine 2847, and threonine 2852 each carry an O-linked (GalNAc...) threonine glycan. The span at 2853 to 2877 shows a compositional bias: polar residues; it reads DASSVSTGHATSLPVTDASSVSTGH. A compositionally biased stretch (low complexity) spans 2895-2907; sequence TPLPLTSLSSVST. 17 O-linked (GalNAc...) threonine glycosylation sites follow: threonine 2910, threonine 2911, threonine 2916, threonine 2918, threonine 2923, threonine 2927, threonine 2932, threonine 2939, threonine 2942, threonine 2943, threonine 2948, threonine 2950, threonine 2955, threonine 2959, threonine 2966, threonine 2971, and threonine 2975. Residues 2916–2942 show a composition bias toward polar residues; sequence TDTSSASTGQATPLPVTSLSSVSTGDT. Over residues 2948–2973 the composition is skewed to polar residues; that stretch reads TDTSSASTGHATSLPVTDTSSASTGH. Composition is skewed to polar residues over residues 2980–2989 and 3009–3037; these read TDTSSASTGH and LPVT…STGH. 4 O-linked (GalNAc...) threonine glycosylation sites follow: threonine 3023, threonine 3028, threonine 3035, and threonine 3039. Residues 3044–3069 show a composition bias toward polar residues; sequence TDTSSASTGHANPLHVTSPSSASTGH. 40 O-linked (GalNAc...) threonine glycosylation sites follow: threonine 3071, threonine 3076, threonine 3078, threonine 3083, threonine 3087, threonine 3092, threonine 3099, threonine 3102, threonine 3103, threonine 3108, threonine 3115, threonine 3118, threonine 3119, threonine 3124, threonine 3126, threonine 3131, threonine 3135, threonine 3140, threonine 3142, threonine 3147, threonine 3150, threonine 3151, threonine 3156, threonine 3158, threonine 3163, threonine 3167, threonine 3172, threonine 3179, threonine 3182, threonine 3183, threonine 3188, threonine 3220, threonine 3227, threonine 3230, threonine 3231, threonine 3236, threonine 3243, threonine 3247, threonine 3252, and threonine 3254. Polar residues predominate over residues 3076–3118; that stretch reads TDTSSASTGHATPLPVTSLSSVSTGDTTPLPVTSPSSASTGHT. The segment covering 3124–3134 has biased composition (polar residues); the sequence is TDTSSASTGQA. Residues 3140–3151 show a composition bias toward low complexity; the sequence is TSTSSASTGDTT. Polar residues-rich tracts occupy residues 3156–3197 and 3205–3251; these read TDTS…STGH and DASS…SLPV. The segment covering 3252–3264 has biased composition (low complexity); it reads TDTSSASTGDTTS. The segment covering 3265–3283 has biased composition (polar residues); that stretch reads LPVTDTSSAYTGDTTSLPV. Over residues 3284 to 3295 the composition is skewed to low complexity; the sequence is TDTSSSSTGDTT. O-linked (GalNAc...) threonine glycans are attached at residues threonine 3294, threonine 3332, threonine 3339, threonine 3342, threonine 3343, threonine 3348, threonine 3350, threonine 3355, and threonine 3359. Positions 3320-3337 are enriched in polar residues; it reads SASTGHATPLHVTSPSSA. The span at 3338–3356 shows a compositional bias: low complexity; sequence STGDTTPVPVTDTSSVSTG. Composition is skewed to polar residues over residues 3365–3374 and 3381–3405; these read GLSSASTGDT and DISS…STGD. An N-linked (GlcNAc...) asparagine glycan is attached at asparagine 3397. O-linked (GalNAc...) threonine glycosylation is found at threonine 3398, threonine 3403, threonine 3406, threonine 3412, threonine 3419, threonine 3423, threonine 3428, threonine 3430, threonine 3435, threonine 3439, and threonine 3444. Over residues 3412 to 3421 the composition is skewed to polar residues; sequence TSPSSASTGH. Residues 3428-3471 show a composition bias toward low complexity; that stretch reads TSTSSASTGHATPVPVTSTSSASTGHTTPLPVTDTSSASTGDTT. O-linked (GalNAc...) serine glycosylation occurs at serine 3445. 99 O-linked (GalNAc...) threonine glycosylation sites follow: threonine 3446, threonine 3451, threonine 3454, threonine 3455, threonine 3460, threonine 3462, threonine 3467, threonine 3470, threonine 3471, threonine 3476, threonine 3483, threonine 3486, threonine 3487, threonine 3492, threonine 3499, threonine 3502, threonine 3504, threonine 3508, threonine 3515, threonine 3519, threonine 3524, threonine 3526, threonine 3531, threonine 3535, threonine 3540, threonine 3547, threonine 3550, threonine 3551, threonine 3556, threonine 3567, threonine 3614, threonine 3615, threonine 3622, threonine 3678, threonine 3679, threonine 3686, threonine 3691, threonine 3695, threonine 3700, threonine 3710, threonine 3711, threonine 3716, threonine 3718, threonine 3723, threonine 3727, threonine 3732, threonine 3739, threonine 3743, threonine 3748, threonine 3780, threonine 3787, threonine 3790, threonine 3791, threonine 3796, threonine 3798, threonine 3803, threonine 3807, threonine 3812, threonine 3822, threonine 3823, threonine 3828, threonine 3835, threonine 3839, threonine 3844, threonine 3851, threonine 3854, threonine 3860, threonine 3867, threonine 3871, threonine 3876, threonine 3883, threonine 3886, threonine 3887, threonine 3892, threonine 3894, threonine 3899, threonine 3903, threonine 3935, threonine 3940, threonine 3942, threonine 3947, threonine 3950, threonine 3951, threonine 3956, threonine 3958, threonine 3963, threonine 3967, threonine 3972, threonine 3979, threonine 3983, threonine 3988, threonine 3990, threonine 3995, threonine 3999, threonine 4004, threonine 4006, threonine 4011, threonine 4015, and threonine 4020. Polar residues predominate over residues 3473 to 3486; the sequence is LPVTSPSSASTGHT. The span at 3493 to 3517 shows a compositional bias: polar residues; sequence IPSSASTGDTSTLPVTGASSASTGH. A compositionally biased stretch (polar residues) spans 3524–3550; it reads TDTSSVSTGHATPLPVTSLSSVSTGDT. Residues 3557 to 3580 are compositionally biased toward polar residues; the sequence is DASSASTGQATPLPVTSLSSVSTG. The span at 3604–3615 shows a compositional bias: low complexity; sequence TDTSSASTGDTT. The span at 3620-3644 shows a compositional bias: polar residues; that stretch reads TDTSSASTGQATPLPVTSLSSVSTG. Over residues 3668-3679 the composition is skewed to low complexity; that stretch reads TDTSSASTGDTT. Over residues 3684–3694 the composition is skewed to polar residues; that stretch reads TDTSSASTGQA. Residues 3710–3728 show a composition bias toward low complexity; sequence TTPLPVTSTSSVSTGHVTP. A compositionally biased stretch (polar residues) spans 3730–3741; that stretch reads HVTSPSSASTGH. The span at 3780-3791 shows a compositional bias: low complexity; the sequence is TDASSASTGDTT. Residues 3796-3822 are compositionally biased toward polar residues; that stretch reads TDTSSASTGQATPLPVTSLSSVSTGDT. Over residues 3860–3869 the composition is skewed to polar residues; it reads TSPSSASTGH. The segment covering 3877–3886 has biased composition (polar residues); the sequence is GLSSASTGDT. The span at 3892–3901 shows a compositional bias: polar residues; the sequence is TDTSSASTRH. The span at 3940 to 3951 shows a compositional bias: low complexity; the sequence is TSTSSASTGDTT. Residues 3956 to 3981 show a composition bias toward polar residues; the sequence is TDTSSVSTGHATSLPVTSRSSASTGH. Residues 3988–3997 are compositionally biased toward polar residues; sequence TDTSSVSTGH. The span at 3999-4011 shows a compositional bias: low complexity; that stretch reads TPLPVTSTSSVST. A compositionally biased stretch (polar residues) spans 4018-4029; that stretch reads PVTSPSSASTGH. Serine 4021, serine 4023, serine 4024, and serine 4026 each carry an O-linked (GalNAc...) serine glycan. O-linked (GalNAc...) threonine glycans are attached at residues threonine 4027, threonine 4031, and threonine 4036. A compositionally biased stretch (low complexity) spans 4030–4047; that stretch reads ATPVPVTSTSSASTGDTT. Serine 4037 carries an O-linked (GalNAc...) serine glycan. 4 O-linked (GalNAc...) threonine glycosylation sites follow: threonine 4038, threonine 4043, threonine 4046, and threonine 4047. The segment covering 4049–4093 has biased composition (polar residues); that stretch reads LPVTNASSLSTGHATPLHVTSPSSASRGDTSTLPVTDASSASTGH. The N-linked (GlcNAc...) asparagine glycan is linked to asparagine 4053. Threonine 4078 and threonine 4084 each carry an O-linked (GalNAc...) threonine glycan. Low complexity predominate over residues 4095-4107; the sequence is TPLPLTSLSSVST. O-linked (GalNAc...) threonine glycosylation is found at threonine 4110, threonine 4111, threonine 4116, threonine 4118, threonine 4123, threonine 4127, threonine 4132, threonine 4139, threonine 4142, threonine 4143, threonine 4148, threonine 4158, threonine 4159, threonine 4164, threonine 4171, threonine 4175, threonine 4180, threonine 4182, threonine 4187, threonine 4190, threonine 4191, threonine 4196, threonine 4198, threonine 4203, threonine 4207, threonine 4212, threonine 4214, threonine 4219, threonine 4223, and threonine 4239. A compositionally biased stretch (polar residues) spans 4116–4142; it reads TDTSSASTGQATPLPVTSLSSVSTGDT. Positions 4149–4173 are enriched in polar residues; sequence IPSSASSGHTTSLPVTDASSVSTGH. A compositionally biased stretch (low complexity) spans 4180-4191; it reads TSTSSASTGDTT. A compositionally biased stretch (polar residues) spans 4196–4205; it reads TDTSSASTGH. Polar residues predominate over residues 4212–4223; that stretch reads TDTSSASTGHAT. Residues 4242–4254 are compositionally biased toward low complexity; sequence AVSSATSASTVSS. The disordered stretch occupies residues 4242–4288; it reads AVSSATSASTVSSDSPLKMETPGMTTPSLKTDGGRRTATSPPPTTSQ. Threonine 4272, threonine 4278, threonine 4280, threonine 4289, threonine 4293, and threonine 4297 each carry an O-linked (GalNAc...) threonine glycan. In terms of domain architecture, NIDO spans 4397–4552; that stretch reads PFWDDADFST…GLQFYRLHRE (156 aa). The region spanning 4553–4668 is the AMOP domain; the sequence is ERPNYRLECL…YLCALYQQRR (116 aa). The VWFD domain maps to 4680–4880; that stretch reads QPAWMFGDPH…TWQINGTGLL (201 aa). N-linked (GlcNAc...) asparagine glycosylation is found at asparagine 4715, asparagine 4768, asparagine 4787, asparagine 4796, asparagine 4831, asparagine 4852, asparagine 4875, asparagine 4902, asparagine 4928, asparagine 4946, asparagine 4982, asparagine 4997, asparagine 5045, asparagine 5052, asparagine 5100, and asparagine 5119. In terms of domain architecture, EGF-like 1 spans 5118 to 5157; it reads QNQSCPVNYCYNQGHCYISQTLGCQPMCTCPPAFTDSRCF. 3 cysteine pairs are disulfide-bonded: cysteine 5122-cysteine 5133, cysteine 5127-cysteine 5145, and cysteine 5147-cysteine 5156. Asparagine 5185, asparagine 5192, and asparagine 5292 each carry an N-linked (GlcNAc...) asparagine glycan. Positions 5321 to 5360 constitute an EGF-like 2 domain; that stretch reads VSPCSRGYCDHGGQCQHLPSGPRCSCVSFSIYTAWGEHCE. 3 disulfide bridges follow: cysteine 5324–cysteine 5335, cysteine 5329–cysteine 5344, and cysteine 5346–cysteine 5359. A helical transmembrane segment spans residues 5369 to 5389; that stretch reads FFGIFFGALGGLLLLGVGTFV.

As to quaternary structure, a heterodimeric complex, composed of a mucin-4 alpha chain and a cysteine-rich transmembrane mucin-4 beta chain. Mucin-4 beta chain interacts with ERBB2 via the EGF-like domain 1. In nonpolarized cells, associates with ERBB2 and ERBB3. In terms of processing, proteolytically cleaved into 2 chains, mucin-4 alpha chain and mucin-4 beta chain. Post-translationally, highly O-glycosylated. Is predominantly N-glycosylated. In terms of tissue distribution, expressed in the thymus, thyroid, lung, trachea, esophagus, stomach, small intestine, colon, testis, prostate, ovary, uterus, placenta, and mammary and salivary glands. Expressed in carcinomas arising from some of these epithelia, such as lung cancers, squamous cell carcinomas of the upper aerodigestive tract, mammary carcinomas, biliary tract, colon, and cervix cancers. Minimally or not expressed in the normal pancreas or chronic pancreatitis, but is highly expressed in pancreatic tumors and pancreatic tumor cell lines.

It localises to the cell membrane. The protein localises to the secreted. Functionally, membrane-bound mucin, a family of highly glycosylated proteins that constitute the major component of the mucus, the slimy and viscous secretion covering epithelial surfaces. These glycoproteins play important roles in the protection of the epithelium and are implicated in epithelial renewal and differentiation. Regulates cellular behavior through both anti-adhesive effects on cell-cell and cell-extracellular matrix interactions and its ability to act as an intramembrane ligand for ERBB2. Plays an important role in proliferation and differentiation of epithelial cells by inducing specific phosphorylation of ERBB2. In polarized epithelial cells, segregates ERBB2 and other ERBB receptors and prevents ERBB2 from acting as a coreceptor. The interaction with ERBB2 leads to enhanced expression of CDKN1B. The formation of a MUC4-ERBB2-ERBB3-NRG1 complex leads to down-regulation of CDKN1B, resulting in repression of apoptosis and stimulation of proliferation. Its ability to promote tumor growth may be mainly due to repression of apoptosis as opposed to proliferation. This is Mucin-4 (MUC4) from Homo sapiens (Human).